The sequence spans 735 residues: MIP-related peptides (735 aa).

An N-terminal signal peptide occupies residues 1 to 20 (MCTRPGLAALLVLMTSCASS). A propeptide spanning residues 21–135 (FSRADTQSAS…EDSDTKVDTR (115 aa)) is cleaved from the precursor. Over residues 33-65 (ALSAASADAQAARQQQEQHLVAQQQQQQQQQQQ) the composition is skewed to low complexity. 2 disordered regions span residues 33–212 (ALSA…FGKK) and 229–251 (FGKKSSGESAGDSGYISVASRGS). Polar residues-rich tracts occupy residues 66–76 (HSNNNEPQQRA) and 101–125 (PVSQPDLSPDFSNPMGSSLSQSGTP). Phe-142, Phe-153, and Phe-164 each carry phenylalanine amide. Basic residues predominate over residues 142 to 159 (FGKKRGQAPRFFGKKRAM). Residues 168–184 (SSEFPTSNSEQLALDTR) constitute a propeptide that is removed on maturation. Phe-190 carries the post-translational modification Phenylalanine amide. A propeptide spanning residues 194–203 (SFPESNREQR) is cleaved from the precursor. Over residues 194-204 (SFPESNREQRG) the composition is skewed to basic and acidic residues. Residues Phe-209 and Phe-229 each carry the phenylalanine amide modification. The propeptide at 214–229 (FDENVDIDERAAPRFF) is linker peptide. The propeptide occupies 233 to 249 (SSGESAGDSGYISVASR). Position 255 is a phenylalanine amide (Phe-255). Positions 259–267 (QDDDIMIAA) are cleaved as a propeptide — linker peptide. Phenylalanine amide is present on Phe-274. Positions 279–287 (SDDNVALDL) are cleaved as a propeptide — linker peptide. Phe-294 is modified (phenylalanine amide). Positions 298 to 311 (QSSDLDDEISVALR) are excised as a propeptide. Phenylalanine amide is present on Phe-317. Residues 321-332 (RADDEDILLGER) constitute a propeptide that is removed on maturation. Phe-338 carries the post-translational modification Phenylalanine amide. Residues 342–353 (RANDENISFSLR) constitute a propeptide that is removed on maturation. Disordered stretches follow at residues 352-373 (LRGSPRFFGKKRSDESDDDNIG) and 381-400 (RFFGKKRSDETDDENIGLMA). Phe-359 is subject to Phenylalanine amide. A propeptide spanning residues 363-377 (RSDESDDDNIGLVAR) is cleaved from the precursor. A Phenylalanine amide modification is found at Phe-383. Positions 387–401 (RSDETDDENIGLMAR) are excised as a propeptide. Residue Phe-407 is modified to Phenylalanine amide. A propeptide spans 412–426 (SDGLDDGGNIIDVAT) (linker peptide). The segment at 430 to 464 (PRFFGKKRSNSDSSDKSSDSALSSSESGRQTRQAP) is disordered. Phe-433 carries the phenylalanine amide modification. Residues 437-461 (RSNSDSSDKSSDSALSSSESGRQTR) constitute a propeptide that is removed on maturation. Over residues 438 to 447 (SNSDSSDKSS) the composition is skewed to basic and acidic residues. Pyrrolidone carboxylic acid is present on Gln-462. Phe-467 carries the post-translational modification Phenylalanine amide. The propeptide occupies 471–493 (YVDEHHVSKRAAATAFPLIIEAR). Residue Gln-494 is modified to Pyrrolidone carboxylic acid. The residue at position 499 (Phe-499) is a Phenylalanine amide. Positions 503 to 509 (EYRYPPR) are excised as a propeptide. Residue Ile-515 is modified to Isoleucine amide. Positions 519–546 (FSLYRSPGKYSLSSPYMSAKEFKETFRR) are excised as a propeptide. Met-552 is subject to Methionine amide. Positions 556 to 585 (TAELNEEGSDDFTNDDTDDENEYDETVLFK) are excised as a propeptide. Val-592 carries the valine amide modification. Position 601 is a leucine amide (Leu-601). Ile-610 carries the isoleucine amide modification. Val-619 carries the post-translational modification Valine amide. Residue Ile-628 is modified to Isoleucine amide. The propeptide at 632–661 (DLDWYQKALCAEADILELDDCADFLGNDDV) is linker peptide. Gln-664 is modified (pyrrolidone carboxylic acid). An Isoleucine amide modification is found at Ile-669. The propeptide at 674 to 705 (GEDVSERDYAQLLEALSRLQAIKQIKARIQNE) is linker peptide. The residue at position 714 (Val-714) is a Valine amide. A propeptide spanning residues 715 to 735 (GRRSEYNLGPFDEFVDESMER) is cleaved from the precursor.

Expressed in the CNS and peripheral tissues (the digestive tract, vasculature, and the reproductive organs).

The protein localises to the secreted. Has some structural and functional features similar to vertebrate opioid peptides. AMRPs are inhibitory on Aplysia esophagus, penis retractor muscle, and body wall muscle. The protein is MIP-related peptides (MRP) of Aplysia californica (California sea hare).